Reading from the N-terminus, the 598-residue chain is Aspartate--tRNA(Asp/Asn) ligase (598 aa).

E174 contributes to the L-aspartate binding site. Residues 198 to 201 (QQLK) are aspartate. R220 is an L-aspartate binding site. ATP-binding positions include 220–222 (RDE) and Q229. H458 contacts L-aspartate. ATP is bound at residue E492. Residue R499 participates in L-aspartate binding. Residue 544-547 (GIDR) coordinates ATP.

Belongs to the class-II aminoacyl-tRNA synthetase family. Type 1 subfamily. As to quaternary structure, homodimer.

The protein localises to the cytoplasm. The catalysed reaction is tRNA(Asx) + L-aspartate + ATP = L-aspartyl-tRNA(Asx) + AMP + diphosphate. Its function is as follows. Aspartyl-tRNA synthetase with relaxed tRNA specificity since it is able to aspartylate not only its cognate tRNA(Asp) but also tRNA(Asn). Reaction proceeds in two steps: L-aspartate is first activated by ATP to form Asp-AMP and then transferred to the acceptor end of tRNA(Asp/Asn). The sequence is that of Aspartate--tRNA(Asp/Asn) ligase from Dehalococcoides mccartyi (strain ATCC BAA-2266 / KCTC 15142 / 195) (Dehalococcoides ethenogenes (strain 195)).